Here is a 102-residue protein sequence, read N- to C-terminus: ATP-dependent Clp protease adapter protein ClpS (102 aa).

Belongs to the ClpS family. Binds to the N-terminal domain of the chaperone ClpA.

Involved in the modulation of the specificity of the ClpAP-mediated ATP-dependent protein degradation. This Desulfotalea psychrophila (strain LSv54 / DSM 12343) protein is ATP-dependent Clp protease adapter protein ClpS.